A 244-amino-acid chain; its full sequence is Vesicle-associated membrane protein-associated protein SCS2 (244 aa).

An N-acetylserine modification is found at Ser2. Over 2-222 (SAVEISPDVL…EAATVPAENE (221 aa)) the chain is Cytoplasmic. The 124-residue stretch at 3-126 (AVEISPDVLV…ISKKIKVKYL (124 aa)) folds into the MSP domain. Position 106 is a phosphoserine (Ser106). A disordered region spans residues 135–219 (QNQNIQENKE…QIKEAATVPA (85 aa)). Positions 153 to 168 (SEPKEVPAVVNEKEVP) are enriched in basic and acidic residues. The segment covering 199–211 (QTSNSTPAPQNQI) has biased composition (polar residues). The chain crosses the membrane as a helical; Anchor for type IV membrane protein span at residues 223-243 (SSSMGIFILVALLILVLGWFY). A topological domain (lumenal) is located at residue Arg244.

The protein belongs to the VAMP-associated protein (VAP) (TC 9.B.17) family. In terms of assembly, interacts with OPI1. Also interacts with PBI1. Interacts with EPO1.

It is found in the endoplasmic reticulum membrane. The protein localises to the nucleus membrane. Its function is as follows. Acts as an endoplasmic reticulum (ER) membrane anchor for cytoplasmic proteins via binding to the FFAT motif of targeted proteins. Regulates phospholipid biosynthesis by modulating the subcellular localization of the transcriptional repressor OPI1. Also contributes to the tethering of the ER to the plasma membrane. Allows interorganelle phosphatidylserine (PtdSer) transport via a process that involves the acceptor membrane complex PDR17-PDS2 that binds to PBI1 which in turn ligates to SCS2 and phosphatidic acid present in the donor membrane, forming a zone of apposition that facilitates PtdSer transfer. The protein is Vesicle-associated membrane protein-associated protein SCS2 of Saccharomyces cerevisiae (strain ATCC 204508 / S288c) (Baker's yeast).